We begin with the raw amino-acid sequence, 299 residues long: Lathosterol oxidase (299 aa).

Helical transmembrane passes span Ile-32 to Leu-52, Phe-79 to Ile-99, and Phe-117 to Ile-137. The region spanning Ile-124–Gly-252 is the Fatty acid hydroxylase domain. The Histidine box-1 motif lies at His-138–His-143. The short motif at His-151 to His-155 is the Histidine box-2 element. The helical transmembrane segment at Ile-186–Ile-206 threads the bilayer. A Histidine box-3 motif is present at residues His-228–His-233. Ser-253 bears the Phosphoserine mark. Residues Glu-274–Glu-299 are disordered. A compositionally biased stretch (basic and acidic residues) spans Lys-286–Glu-299.

It belongs to the sterol desaturase family. Fe cation serves as cofactor.

It localises to the endoplasmic reticulum membrane. It carries out the reaction a Delta(7)-sterol + 2 Fe(II)-[cytochrome b5] + O2 + 2 H(+) = a Delta(5),Delta(7)-sterol + 2 Fe(III)-[cytochrome b5] + 2 H2O. The catalysed reaction is lathosterol + 2 Fe(II)-[cytochrome b5] + O2 + 2 H(+) = 7-dehydrocholesterol + 2 Fe(III)-[cytochrome b5] + 2 H2O. The enzyme catalyses 5alpha-cholesta-7,24-dien-3beta-ol + 2 Fe(II)-[cytochrome b5] + O2 + 2 H(+) = 7-dehydrodesmosterol + 2 Fe(III)-[cytochrome b5] + 2 H2O. It functions in the pathway steroid biosynthesis; cholesterol biosynthesis. In terms of biological role, catalyzes the penultimate step of the biosynthesis of cholesterol, the dehydrogenation of lathosterol into 7-dehydrocholesterol (7-DHC). Cholesterol is the major sterol component in mammalian membranes and a precursor for bile acid and steroid hormone synthesis. In addition to its essential role in cholesterol biosynthesis, it also indirectly regulates ferroptosis through the production of 7-DHC. By diverting the spread of damage caused by peroxyl radicals from the phospholipid components to its sterol nucleus, 7-DHC prevents this form of cell death. In Homo sapiens (Human), this protein is Lathosterol oxidase.